Reading from the N-terminus, the 102-residue chain is uncharacterized protein (102 aa).

This is an uncharacterized protein from Sulfolobus islandicus rod-shaped virus 1 (SIRV-1).